A 235-amino-acid polypeptide reads, in one-letter code: Sugar fermentation stimulation protein homolog (235 aa).

Belongs to the SfsA family.

This Aliivibrio fischeri (strain MJ11) (Vibrio fischeri) protein is Sugar fermentation stimulation protein homolog.